The primary structure comprises 150 residues: Transcriptional repressor NrdR (150 aa).

A zinc finger lies at 3 to 34 (CPFCNASDTKVVDTRASEDDKIVRRRRECISC). In terms of domain architecture, ATP-cone spans 49–139 (LTVVKKDKNR…VYREFTDVKS (91 aa)).

It belongs to the NrdR family. Requires Zn(2+) as cofactor.

In terms of biological role, negatively regulates transcription of bacterial ribonucleotide reductase nrd genes and operons by binding to NrdR-boxes. The protein is Transcriptional repressor NrdR of Finegoldia magna (strain ATCC 29328 / DSM 20472 / WAL 2508) (Peptostreptococcus magnus).